The chain runs to 274 residues: Protein CIMAP1C (274 aa).

The tract at residues 1 to 27 is disordered; it reads MKLPKGTRSSVYFAQHPEKEPLPSRQE. Residues 16 to 27 show a composition bias toward basic and acidic residues; the sequence is HPEKEPLPSRQE. STPGR repeat units follow at residues 199–224 and 235–260; these read PGPT…MAKR and PGPG…MGIK.

It belongs to the CIMAP family.

The protein is Protein CIMAP1C of Homo sapiens (Human).